Reading from the N-terminus, the 234-residue chain is HTH-type transcriptional regulator ArcR (234 aa).

An a nucleoside 3',5'-cyclic phosphate-binding site is contributed by 40-129 (VRHYTKGQVI…MAFLCKANDD (90 aa)). One can recognise an HTH crp-type domain in the interval 155–228 (KFAKDRIIKL…HKNWLVSKHL (74 aa)). The segment at residues 188 to 207 (IQLMSDMAGISRETAGHIIH) is a DNA-binding region (H-T-H motif).

It localises to the cytoplasm. Functionally, positively regulates the expression of the arcABDCR operon under anaerobic conditions, thus playing an essential role in arginine catabolism. May also control the expression of genes encoding proteins which are involved in anaerobic metabolism. Can bind cyclic AMP. This is HTH-type transcriptional regulator ArcR (arcR) from Staphylococcus aureus (strain Mu50 / ATCC 700699).